The chain runs to 407 residues: tRNA (uracil(54)-C(5))-methyltransferase (407 aa).

[4Fe-4S] cluster contacts are provided by Cys-61, Cys-67, Cys-70, and Cys-137. Residues Gln-253, Tyr-279, Thr-284, 300 to 301 (DS), Asp-327, and Asp-341 each bind S-adenosyl-L-methionine. Cys-368 acts as the Nucleophile in catalysis. The active-site Proton acceptor is Glu-400.

The protein belongs to the class I-like SAM-binding methyltransferase superfamily. RNA M5U methyltransferase family.

It catalyses the reaction uridine(54) in tRNA + S-adenosyl-L-methionine = 5-methyluridine(54) in tRNA + S-adenosyl-L-homocysteine + H(+). In terms of biological role, catalyzes the formation of 5-methyl-uridine at position 54 (m5U54) in tRNA. The sequence is that of tRNA (uracil(54)-C(5))-methyltransferase from Pyrococcus horikoshii (strain ATCC 700860 / DSM 12428 / JCM 9974 / NBRC 100139 / OT-3).